The primary structure comprises 856 residues: Valine--tRNA ligase (856 aa).

The 'HIGH' region signature appears at 47–57 (PTASGVLHIGH). The 'KMSKS' region motif lies at 578 to 582 (KMSKS). Residue K581 participates in ATP binding.

It belongs to the class-I aminoacyl-tRNA synthetase family. ValS type 2 subfamily. As to quaternary structure, monomer.

The protein localises to the cytoplasm. The enzyme catalyses tRNA(Val) + L-valine + ATP = L-valyl-tRNA(Val) + AMP + diphosphate. Catalyzes the attachment of valine to tRNA(Val). As ValRS can inadvertently accommodate and process structurally similar amino acids such as threonine, to avoid such errors, it has a 'posttransfer' editing activity that hydrolyzes mischarged Thr-tRNA(Val) in a tRNA-dependent manner. In Tropheryma whipplei (strain Twist) (Whipple's bacillus), this protein is Valine--tRNA ligase.